A 176-amino-acid polypeptide reads, in one-letter code: Sigma intracellular receptor 2 (176 aa).

Residues 1–9 are Cytoplasmic-facing; the sequence is MGAPATRRC. Residues 10–30 traverse the membrane as a helical segment; sequence VEWLLGLYFLSHIPITLFMDL. The region spanning 10–158 is the EXPERA domain; the sequence is VEWLLGLYFL…PYLLIPFILL (149 aa). Over 31 to 68 the chain is Lumenal; it reads QAVLPRELYPVEFRNLLKWYAKEFKDPLLQEPPAWFKS. A helical transmembrane segment spans residues 69–89; that stretch reads FLFCELVFQLPFFPIATYAFL. Cholesterol is bound by residues valine 75 and glutamine 77. At 90–99 the chain is on the cytoplasmic side; it reads KGSCKWIRTP. A helical membrane pass occupies residues 100–120; the sequence is AIIYSVHTMTTLIPILSTFLF. Positions 108 to 176 are required for interaction with Hst1/HTN1; it reads MTTLIPILST…YKYEEKRKKK (69 aa). The Lumenal portion of the chain corresponds to 121-140; sequence EDFSKASGFKGQRPETLHER. A helical transmembrane segment spans residues 141–161; that stretch reads LTLVSVYAPYLLIPFILLIFM. Topologically, residues 162–176 are cytoplasmic; it reads LRSPYYKYEEKRKKK. An ER retention motif motif is present at residues 172 to 176; sequence KRKKK.

Belongs to the TMEM97/sigma-2 receptor family. Homodimer. Interacts with NPC1; the interaction impairs NPC1-mediated cholesterol transport. Interacts with PGRMC1 and LDLR; the interaction increases LDL internalization. Interacts with histatin 1/HTN1; the interaction induces HTN1-stimulating wound healing. Interacts with TSPO. Forms a complex with TSPO and PGRMC1; the interaction occurs in MIA PaCa-2 cells but not in MCF7 cells. Widely expressed in normal tissues. Expressed in pancreatic, renal, breast, colon, ovarian surface epithelial (OSE) cells. Highly expressed in various proliferating cancer cells.

It localises to the rough endoplasmic reticulum membrane. The protein resides in the nucleus membrane. Its function is as follows. Sigma-2 receptor which contributes to ameliorate dysfunctional cellular processes and slow degenerative progression by regulating cell functions including cholesterol biosynthesis/trafficking, membrane trafficking, autophagy, lipid membrane-bound protein trafficking, and receptor stabilization at the cell surface. Forms a ternary complex with PGRMC1 receptor and low density lipoprotein receptor/LDLR at the plasma membrane, which increases LDLR-mediated LDL cholesterol internalization. Decreases lysosomal sterol transporter NPC1 availability to the cell, probably through NPC1-binding, hence controlling lipid transport, including cholesterol and LBPA, outside of late endosome/lysosome. Binds regio- and stereoselective ligand 20(S)-hydroxycholesterol (20(S)-OHC) which enhances TMEM97-NPC1 interaction and decreases TMEM97-PGRMC1 and TMEM97-TSPO interactions, thereby linking OHC binding to cholesterol homeostasis. Also able to bind cholesterol. Binds histatin 1 (Hst 1)/HN1 salivary peptide at the ER membrane, which is critical for increasing mitochondria-ER contacts and stimulating Hst1 wound healing properties. May alter the activity of some cytochrome P450 proteins. Although shows homologies with sterol isomerases (EXPERA domain), not able to catalyze sterol isomerization. However, may act as sensors of these molecules. Acts as a quality control factor in the ER, promoting the proteolytic degradation of nonproductive and extramitochondrial precursor proteins in the ER membrane thus removing them from the ER surface. The chain is Sigma intracellular receptor 2 from Homo sapiens (Human).